Here is a 642-residue protein sequence, read N- to C-terminus: Threonine--tRNA ligase (642 aa).

The TGS domain maps to 1 to 61 (MPVITLPDGS…ESDAQLAIIT (61 aa)). Positions 243-534 (DHRKIGKQLD…LTEEYAGFFP (292 aa)) are catalytic. Positions 334, 385, and 511 each coordinate Zn(2+).

Belongs to the class-II aminoacyl-tRNA synthetase family. As to quaternary structure, homodimer. The cofactor is Zn(2+).

Its subcellular location is the cytoplasm. It catalyses the reaction tRNA(Thr) + L-threonine + ATP = L-threonyl-tRNA(Thr) + AMP + diphosphate + H(+). Catalyzes the attachment of threonine to tRNA(Thr) in a two-step reaction: L-threonine is first activated by ATP to form Thr-AMP and then transferred to the acceptor end of tRNA(Thr). Also edits incorrectly charged L-seryl-tRNA(Thr). This chain is Threonine--tRNA ligase, found in Yersinia enterocolitica serotype O:8 / biotype 1B (strain NCTC 13174 / 8081).